The sequence spans 78 residues: Protein Vpr (78 aa).

The interval 1–42 (MEQAPEDQGPQREPHNEWTLELLEELKNEAVRHFPRIWLHGL) is homooligomerization.

It belongs to the HIV-1 VPR protein family. Homooligomer, may form homodimer. Interacts with p6-gag region of the Pr55 Gag precursor protein through a (Leu-X-X)4 motif near the C-terminus of the P6gag protein. Interacts with host UNG. May interact with host RAD23A/HHR23A. Interacts with host VPRBP/DCAF1, leading to hijack the CUL4A-RBX1-DDB1-DCAF1/VPRBP complex, mediating ubiquitination of host proteins such as TERT and ZGPAT and arrest of the cell cycle in G2 phase. In terms of processing, phosphorylated on several residues by host. These phosphorylations regulate VPR activity for the nuclear import of the HIV-1 pre-integration complex.

Its subcellular location is the virion. It is found in the host nucleus. The protein localises to the host extracellular space. During virus replication, may deplete host UNG protein, and incude G2-M cell cycle arrest. Acts by targeting specific host proteins for degradation by the 26S proteasome, through association with the cellular CUL4A-DDB1 E3 ligase complex by direct interaction with host VPRPB/DCAF-1. Cell cycle arrest reportedly occurs within hours of infection and is not blocked by antiviral agents, suggesting that it is initiated by the VPR carried into the virion. Additionally, VPR induces apoptosis in a cell cycle dependent manner suggesting that these two effects are mechanistically linked. Detected in the serum and cerebrospinal fluid of AIDS patient, VPR may also induce cell death to bystander cells. Its function is as follows. During virus entry, plays a role in the transport of the viral pre-integration (PIC) complex to the host nucleus. This function is crucial for viral infection of non-dividing macrophages. May act directly at the nuclear pore complex, by binding nucleoporins phenylalanine-glycine (FG)-repeat regions. This Human immunodeficiency virus type 1 group M subtype B (isolate PCV12) (HIV-1) protein is Protein Vpr.